A 223-amino-acid chain; its full sequence is Ribose-5-phosphate isomerase A (223 aa).

Substrate contacts are provided by residues 28 to 31 (TGST), 81 to 84 (DGTD), and 94 to 97 (KGGG). Glutamate 103 acts as the Proton acceptor in catalysis. Lysine 121 lines the substrate pocket.

It belongs to the ribose 5-phosphate isomerase family. In terms of assembly, homodimer.

The enzyme catalyses aldehydo-D-ribose 5-phosphate = D-ribulose 5-phosphate. It participates in carbohydrate degradation; pentose phosphate pathway; D-ribose 5-phosphate from D-ribulose 5-phosphate (non-oxidative stage): step 1/1. Its function is as follows. Catalyzes the reversible conversion of ribose-5-phosphate to ribulose 5-phosphate. This chain is Ribose-5-phosphate isomerase A, found in Baumannia cicadellinicola subsp. Homalodisca coagulata.